The chain runs to 906 residues: Protein kintoun (906 aa).

Ser-376 carries the post-translational modification Phosphoserine. Disordered stretches follow at residues 614–691 and 793–906; these read QQQK…RKQR and RKKN…DEDM. The span at 618-631 shows a compositional bias: basic residues; that stretch reads KLNKKQRKRNKKQR. Over residues 639–655 the composition is skewed to basic and acidic residues; it reads EELKAAQEELQLQHEKQ. Over residues 793 to 808 the composition is skewed to basic residues; the sequence is RKKNQKRRDCKLRAQQ. Position 812 is a phosphoserine (Ser-812). Polar residues predominate over residues 837–850; that stretch reads ANAQYFKQPNNNNG. 2 stretches are compositionally biased toward basic and acidic residues: residues 851–865 and 875–887; these read HDQD…HDSG and NNEE…EADA. The segment covering 894–906 has biased composition (acidic residues); sequence EMDDDDEDEDEDM.

The protein belongs to the PIH1 family. Kintoun subfamily. As to quaternary structure, interacts with Pp1alpha-96A, Pp1-87B, Pp1-13C and flw.

The protein resides in the cytoplasm. Its function is as follows. Required for cytoplasmic pre-assembly of axonemal dyneins, thereby playing a central role in motility in cilia and flagella. Involved in pre-assembly of dynein arm complexes in the cytoplasm before intraflagellar transport loads them for the ciliary compartment. The sequence is that of Protein kintoun from Drosophila virilis (Fruit fly).